We begin with the raw amino-acid sequence, 192 residues long: Thymidine kinase (192 aa).

Residues 9 to 16 and 87 to 90 each bind ATP; these read SAMNAGKS and DECQ. Residue E88 is the Proton acceptor of the active site. Zn(2+) is bound by residues C145, C147, C182, and H185.

The protein belongs to the thymidine kinase family. Homotetramer.

It localises to the cytoplasm. The catalysed reaction is thymidine + ATP = dTMP + ADP + H(+). The sequence is that of Thymidine kinase from Aliivibrio fischeri (strain ATCC 700601 / ES114) (Vibrio fischeri).